A 179-amino-acid chain; its full sequence is Protein HEADING DATE 3A (179 aa).

The protein belongs to the phosphatidylethanolamine-binding protein family. In terms of tissue distribution, expressed in the inner region of the SAM, stem and leaf blade vascular tissues (at protein level).

The protein resides in the cytoplasm. It is found in the nucleus. Its function is as follows. Probable mobile flower-promoting signal (florigen) that moves from the leaf to the shoot apical meristem (SAM) and induces flowering. Promotes the transition from vegetative growth to flowering downstream of HD1 and EHD1 under short day (SD) conditions. Acts upstream of MADS14 and MADS15. This chain is Protein HEADING DATE 3A (HD3A), found in Oryza sativa subsp. japonica (Rice).